A 304-amino-acid polypeptide reads, in one-letter code: Aspartate carbamoyltransferase catalytic subunit (304 aa).

Arginine 49 and threonine 50 together coordinate carbamoyl phosphate. Residue lysine 77 coordinates L-aspartate. The carbamoyl phosphate site is built by arginine 99, histidine 127, and glutamine 130. The L-aspartate site is built by arginine 160 and arginine 211. The carbamoyl phosphate site is built by alanine 252 and proline 253.

This sequence belongs to the aspartate/ornithine carbamoyltransferase superfamily. ATCase family. As to quaternary structure, heterododecamer (2C3:3R2) of six catalytic PyrB chains organized as two trimers (C3), and six regulatory PyrI chains organized as three dimers (R2).

It carries out the reaction carbamoyl phosphate + L-aspartate = N-carbamoyl-L-aspartate + phosphate + H(+). Its pathway is pyrimidine metabolism; UMP biosynthesis via de novo pathway; (S)-dihydroorotate from bicarbonate: step 2/3. Catalyzes the condensation of carbamoyl phosphate and aspartate to form carbamoyl aspartate and inorganic phosphate, the committed step in the de novo pyrimidine nucleotide biosynthesis pathway. This chain is Aspartate carbamoyltransferase catalytic subunit, found in Bacillus cereus (strain G9842).